A 172-amino-acid chain; its full sequence is Putative phosphoesterase BT9727_1129 (172 aa).

Catalysis depends on H34, which acts as the Proton donor. 2 short sequence motifs (HXTX) span residues 34–37 (HITL) and 115–118 (HLTI). H115 functions as the Proton acceptor in the catalytic mechanism.

The protein belongs to the 2H phosphoesterase superfamily. YjcG family.

This chain is Putative phosphoesterase BT9727_1129, found in Bacillus thuringiensis subsp. konkukian (strain 97-27).